The primary structure comprises 347 residues: MPAPQCASCHKARAALRRPRSGQALCGSCFCAAFEAEVLHTVVAGRLLPPGAVVAVGASGGKDSTVLAHVLRELAPRLGISLHLVAVDEGIGGYRDAALAAVRRQAARWELPLTVVAYADLFGGWTMDAVARSTAGSGRSRACCTFCGVLRRRALEEGARLVGATHVVTGHNADDMAETVLMNFLRGDAGRLARGGGLGSPGEGGALPRCRPLQLASQKEVVLYAHFRRLDYFSEECVYAPEAFRGHARDLLKMLEAARPSAVLDLVHSAERLALAPTARPPPPGACSRCGALASRALCQACALLDGLNRGRPRLAIGKGRRGLDEEGPPREPQPSRPLTSEPVPDF.

A Phosphoserine modification is found at serine 200. The segment at 315–347 (LAIGKGRRGLDEEGPPREPQPSRPLTSEPVPDF) is disordered.

This sequence belongs to the TtcA family. CTU1/NCS6/ATPBD3 subfamily. In terms of assembly, component of a complex at least composed of URM1, CTU2/NCS2 and CTU1/ATPBD3. May form a heterodimer with CTU2/NCS2.

It is found in the cytoplasm. The protein operates within tRNA modification; 5-methoxycarbonylmethyl-2-thiouridine-tRNA biosynthesis. In terms of biological role, plays a central role in 2-thiolation of mcm(5)S(2)U at tRNA wobble positions of tRNA(Lys), tRNA(Glu) and tRNA(Gln). Directly binds tRNAs and probably acts by catalyzing adenylation of tRNAs, an intermediate required for 2-thiolation. It is unclear whether it acts as a sulfurtransferase that transfers sulfur from thiocarboxylated URM1 onto the uridine of tRNAs at wobble position. The sequence is that of Cytoplasmic tRNA 2-thiolation protein 1 from Bos taurus (Bovine).